A 421-amino-acid chain; its full sequence is MQLLNFGLLLLPFVAGDLAPQPEPLLAGPSDVVPGQYIVTLKEGLTSAQIRDHKKWVSSVHRANLEGFAAGASGVETEGIMKHFHIHDLNMYSGGFDEKTVEDLSRNPYVKSVHPDQHVYLAKTVTQRQARWGLGYMSSKGKPVPLHSTLVDYSYDDKAGEGVWAYVLDTGINVNHVEFEGRAILGHNAIPNKPHTDEFGHGTYVAGIIAGKTYGVAKKANVVSAKAFDTGSSTYNYILETYDWIVRNITDSNRKNKAVINFSISGAKYQPFDDAVEKAFKAGIATVVAAGNDGKDAKNNTPASSPNAITVGAVRWENTRPSFSNYGKIVDIWAPGELIKSCWKGGNNATSTQSGTSAASPHVAGLVAYLMSTENLPSPSAVTARVLNLTIPNLVKDAKDSPNRVVYNGIQERKFTLPKYF.

An N-terminal signal peptide occupies residues Met-1–Gly-16. The propeptide occupies Asp-17–Ala-122. An Inhibitor I9 domain is found at Gln-36–Ala-122. Positions Arg-131 to Phe-421 constitute a Peptidase S8 domain. Residues Asp-169 and His-201 each act as charge relay system in the active site. N-linked (GlcNAc...) asparagine glycans are attached at residues Asn-248, Asn-261, and Asn-348. Ser-357 serves as the catalytic Charge relay system. N-linked (GlcNAc...) asparagine glycosylation occurs at Asn-388.

This sequence belongs to the peptidase S8 family.

It localises to the secreted. Its function is as follows. Secreted subtilisin-like serine protease with keratinolytic activity that contributes to pathogenicity. This Trichophyton tonsurans (Scalp ringworm fungus) protein is Subtilisin-like protease 2 (SUB2).